The following is a 114-amino-acid chain: Iron-sulfur cluster insertion protein ErpA (114 aa).

The iron-sulfur cluster site is built by Cys-42, Cys-106, and Cys-108.

Belongs to the HesB/IscA family. In terms of assembly, homodimer. It depends on iron-sulfur cluster as a cofactor.

Functionally, required for insertion of 4Fe-4S clusters for at least IspG. This is Iron-sulfur cluster insertion protein ErpA from Pasteurella multocida (strain Pm70).